We begin with the raw amino-acid sequence, 9159 residues long: Halomucin (9159 aa).

The N-terminal stretch at 1 to 30 (MSQTAKPIFAVVVALIVLISGVAFIGSVSA) is a signal peptide. 2 consecutive C-type lectin domains span residues 644–776 (TTGN…YLVE) and 929–1060 (YDGH…VEYG). Over residues 1310–1332 (QPQTVNDPDAVSTRNNNVGSNGL) the composition is skewed to polar residues. A disordered region spans residues 1310–1351 (QPQTVNDPDAVSTRNNNVGSNGLDSKIEDDQNNGADGNPHGT). The segment at 1756 to 3380 (VGGLIGESSG…GFNGEHVGGL (1625 aa)) is V-G-G-L motif-rich region. Disordered regions lie at residues 3484–3514 (GATA…PAPQ), 4878–4912 (ESYW…TTPA), 6570–6589 (TDSA…SSGQ), 7047–7097 (TPTV…GINT), 7660–7702 (ATDS…NPGG), 7888–7923 (IDGD…EPAL), 8212–8237 (STQQ…GAAD), and 8369–8614 (DSTA…GSST). Residues 3495 to 3505 (GTPGGATGYGS) are compositionally biased toward gly residues. Residues 4880-4890 (YWDKGATDKSD) show a composition bias toward basic and acidic residues. Polar residues-rich tracts occupy residues 7048 to 7057 (PTVTINSSSD) and 7068 to 7078 (GEDSTSSNESS). Acidic residues predominate over residues 7079 to 7092 (DGTESDQGDPEDDI). The segment covering 7681–7698 (VTGSTPTFVSSGTVTTPE) has biased composition (polar residues). The Cadherin domain maps to 7686–7793 (PTFVSSGTVT…ITDVDEQPTG (108 aa)). 2 stretches are compositionally biased toward acidic residues: residues 7888 to 7898 (IDGDGLADDNE) and 7905 to 7920 (DNDD…EDQE). Residues 8378-8390 (ALEDDSSNQDSGD) show a composition bias toward acidic residues. Low complexity-rich tracts occupy residues 8391–8529 (DSSN…SSQN) and 8538–8548 (SAAAVGAESGS). 2 stretches are compositionally biased toward gly residues: residues 8549–8566 (EMGG…GDGS) and 8574–8608 (AGGG…GSSS).

Post-translationally, probably glycosylated with sugar containing sialic acid. This may further contribute to its overall negative charge, thereby creating an aqueous shield covering the cells.

It is found in the secreted. In terms of biological role, may protect the organism from desiccation stress. May also contribute to the rigidity and maintenance of the unique square cell morphology of H.walsbyi. This is Halomucin (hmu) from Haloquadratum walsbyi (strain DSM 16790 / HBSQ001).